A 394-amino-acid chain; its full sequence is Phosphopentomutase (394 aa).

Asp13, Asp286, His291, Asp327, His328, and His339 together coordinate Mn(2+).

Belongs to the phosphopentomutase family. Mn(2+) is required as a cofactor.

It is found in the cytoplasm. It catalyses the reaction 2-deoxy-alpha-D-ribose 1-phosphate = 2-deoxy-D-ribose 5-phosphate. It carries out the reaction alpha-D-ribose 1-phosphate = D-ribose 5-phosphate. The protein operates within carbohydrate degradation; 2-deoxy-D-ribose 1-phosphate degradation; D-glyceraldehyde 3-phosphate and acetaldehyde from 2-deoxy-alpha-D-ribose 1-phosphate: step 1/2. Isomerase that catalyzes the conversion of deoxy-ribose 1-phosphate (dRib-1-P) and ribose 1-phosphate (Rib-1-P) to deoxy-ribose 5-phosphate (dRib-5-P) and ribose 5-phosphate (Rib-5-P), respectively. This Bacillus cereus (strain G9842) protein is Phosphopentomutase.